Reading from the N-terminus, the 348-residue chain is UDP-3-O-acylglucosamine N-acyltransferase (348 aa).

H241 serves as the catalytic Proton acceptor.

This sequence belongs to the transferase hexapeptide repeat family. LpxD subfamily. In terms of assembly, homotrimer.

The enzyme catalyses a UDP-3-O-[(3R)-3-hydroxyacyl]-alpha-D-glucosamine + a (3R)-hydroxyacyl-[ACP] = a UDP-2-N,3-O-bis[(3R)-3-hydroxyacyl]-alpha-D-glucosamine + holo-[ACP] + H(+). Its pathway is bacterial outer membrane biogenesis; LPS lipid A biosynthesis. In terms of biological role, catalyzes the N-acylation of UDP-3-O-acylglucosamine using 3-hydroxyacyl-ACP as the acyl donor. Is involved in the biosynthesis of lipid A, a phosphorylated glycolipid that anchors the lipopolysaccharide to the outer membrane of the cell. The sequence is that of UDP-3-O-acylglucosamine N-acyltransferase from Neisseria meningitidis serogroup B (strain ATCC BAA-335 / MC58).